Consider the following 670-residue polypeptide: Probable beta-glucosidase N (670 aa).

The signal sequence occupies residues M1 to G21. The N-linked (GlcNAc...) asparagine glycan is linked to N51. The interval F65–R87 is disordered. The N-linked (GlcNAc...) asparagine glycan is linked to N141. The active site involves D152. N-linked (GlcNAc...) asparagine glycans are attached at residues N184, N248, N330, and N417.

It belongs to the glycosyl hydrolase 3 family.

It is found in the secreted. It catalyses the reaction Hydrolysis of terminal, non-reducing beta-D-glucosyl residues with release of beta-D-glucose.. It participates in glycan metabolism; cellulose degradation. Functionally, beta-glucosidases are one of a number of cellulolytic enzymes involved in the degradation of cellulosic biomass. Catalyzes the last step releasing glucose from the inhibitory cellobiose. This Emericella nidulans (strain FGSC A4 / ATCC 38163 / CBS 112.46 / NRRL 194 / M139) (Aspergillus nidulans) protein is Probable beta-glucosidase N (bglN).